The primary structure comprises 279 residues: Acyl-[acyl-carrier-protein]--UDP-N-acetylglucosamine O-acyltransferase (279 aa).

The segment at 256 to 279 (IERGADKDALQDESVEKEGALVES) is disordered.

It belongs to the transferase hexapeptide repeat family. LpxA subfamily. Homotrimer.

The protein localises to the cytoplasm. The catalysed reaction is a (3R)-hydroxyacyl-[ACP] + UDP-N-acetyl-alpha-D-glucosamine = a UDP-3-O-[(3R)-3-hydroxyacyl]-N-acetyl-alpha-D-glucosamine + holo-[ACP]. It participates in glycolipid biosynthesis; lipid IV(A) biosynthesis; lipid IV(A) from (3R)-3-hydroxytetradecanoyl-[acyl-carrier-protein] and UDP-N-acetyl-alpha-D-glucosamine: step 1/6. In terms of biological role, involved in the biosynthesis of lipid A, a phosphorylated glycolipid that anchors the lipopolysaccharide to the outer membrane of the cell. The protein is Acyl-[acyl-carrier-protein]--UDP-N-acetylglucosamine O-acyltransferase of Chlamydia caviae (strain ATCC VR-813 / DSM 19441 / 03DC25 / GPIC) (Chlamydophila caviae).